A 465-amino-acid chain; its full sequence is Methionine aminopeptidase 2-2 (465 aa).

A compositionally biased stretch (basic and acidic residues) spans 1-13 (MGSKTPNDHRRGP). The interval 1 to 92 (MGSKTPNDHR…KKKTLLGGLQ (92 aa)) is disordered. Positions 44–55 (GETEDGEDEDDD) are enriched in acidic residues. Basic residues predominate over residues 71–86 (TKKKNKRKKNKKKKKT). His-217 lines the substrate pocket. Positions 238, 249, and 318 each coordinate a divalent metal cation. His-326 provides a ligand contact to substrate. A divalent metal cation contacts are provided by Glu-351 and Glu-446.

This sequence belongs to the peptidase M24A family. Methionine aminopeptidase eukaryotic type 2 subfamily. The cofactor is Co(2+). Requires Zn(2+) as cofactor. Mn(2+) is required as a cofactor. It depends on Fe(2+) as a cofactor.

The protein resides in the cytoplasm. It catalyses the reaction Release of N-terminal amino acids, preferentially methionine, from peptides and arylamides.. Cotranslationally removes the N-terminal methionine from nascent proteins. The N-terminal methionine is often cleaved when the second residue in the primary sequence is small and uncharged (Met-Ala-, Cys, Gly, Pro, Ser, Thr, or Val). This chain is Methionine aminopeptidase 2-2, found in Ajellomyces dermatitidis (strain ER-3 / ATCC MYA-2586) (Blastomyces dermatitidis).